A 228-amino-acid chain; its full sequence is MYSIKMRASHEDIHISGAETMCEFEDLENYLKKYFNKAFNHENGNIDFLNLKIEKVKAPIQTLVALPVVENLNDTLTQLAKQTGVSEYALNKGLEFIKNDITYTGAIILSAQTGQRLDSTEQRGIRVTQLAFKTCKCNGEISERVKDARALATCINAFEGVKAELCVSDDLHYTTGYFASPKLGYRRIFNIKEKGTRHGGRIIFVDEGIHLNEYVSFLETVPKEIIEK.

Belongs to the BioW family. As to quaternary structure, homodimer. Mg(2+) serves as cofactor.

It catalyses the reaction heptanedioate + ATP + CoA = 6-carboxyhexanoyl-CoA + AMP + diphosphate. It functions in the pathway metabolic intermediate metabolism; pimeloyl-CoA biosynthesis; pimeloyl-CoA from pimelate: step 1/1. In terms of biological role, catalyzes the transformation of pimelate into pimeloyl-CoA with concomitant hydrolysis of ATP to AMP. The protein is 6-carboxyhexanoate--CoA ligase of Staphylococcus epidermidis (strain ATCC 12228 / FDA PCI 1200).